The following is a 520-amino-acid chain: Keratin, type II cytoskeletal 72 (520 aa).

The head stretch occupies residues 1-133 (MSRQLTLYPG…DPEIQKVRAQ (133 aa)). The tract at residues 134–169 (EREQIKALNNKFASFIDKVRFLEQQNQVLETKWELL) is coil 1A. One can recognise an IF rod domain in the interval 134-447 (EREQIKALNN…KLLESEESRM (314 aa)). Positions 170-188 (QQLDLNNSKRSLEPVHESY) are linker 1. The coil 1B stretch occupies residues 189 to 280 (ISNLQKQLEI…VLFEGEIAQM (92 aa)). The interval 281–304 (QSHISDTSVILSMDNNRQLDLDSI) is linker 12. The interval 305 to 443 (LAEVRAQYEE…ATYRKLLESE (139 aa)) is coil 2. The tail stretch occupies residues 444–520 (ESRMAGEYPN…SSGTTKKTSR (77 aa)). A disordered region spans residues 494–520 (KGSCGSELKDPPAKTSGSSGTTKKTSR). Residues 507–520 (KTSGSSGTTKKTSR) show a composition bias toward low complexity.

It belongs to the intermediate filament family. In terms of assembly, heterotetramer of two type I and two type II keratins.

Functionally, has a role in hair formation. Specific component of keratin intermediate filaments in the inner root sheath (IRS) of the hair follicle. This Mus musculus (Mouse) protein is Keratin, type II cytoskeletal 72 (Krt72).